The sequence spans 470 residues: Box C/D snoRNA protein 1 (470 aa).

The interval M1 to E70 is disordered. S25 is subject to Phosphoserine. Residues E41–L51 are compositionally biased toward gly residues. Residues K79, K108, K118, K138, K143, K153, K162, K173, K183, and K200 each participate in a glycyl lysine isopeptide (Lys-Gly) (interchain with G-Cter in SUMO2) cross-link. Residues C220, C223, C232, C235, C240, C244, H248, and C254 each contribute to the Zn(2+) site. The HIT-type zinc finger occupies C220–C254. Residue K459 forms a Glycyl lysine isopeptide (Lys-Gly) (interchain with G-Cter in SUMO2) linkage.

The protein belongs to the BCD1 family. Interacts with FBL, SNU13, NOP58, NUFIP1, RUVBL1, RUVBL2 and TAF9. Interacts (via HIT-type zinc finger) with the RUVBL1/RUVBL2 complex in the presence of ADP.

Required for box C/D snoRNAs accumulation involved in snoRNA processing, snoRNA transport to the nucleolus and ribosome biogenesis. The polypeptide is Box C/D snoRNA protein 1 (ZNHIT6) (Homo sapiens (Human)).